The chain runs to 341 residues: Putative [LysW]-lysine/[LysW]-ornithine hydrolase (341 aa).

Histidine 62 provides a ligand contact to Zn(2+). Residue aspartate 64 is part of the active site. Residue aspartate 86 participates in Zn(2+) binding. The Proton acceptor role is filled by glutamate 115. The Zn(2+) site is built by glutamate 116, glutamate 140, and histidine 309.

The protein belongs to the peptidase M20A family. LysK subfamily. Requires Zn(2+) as cofactor. It depends on Co(2+) as a cofactor.

It is found in the cytoplasm. It catalyses the reaction [amino-group carrier protein]-C-terminal-gamma-(L-lysyl)-L-glutamate + H2O = [amino-group carrier protein]-C-terminal-L-glutamate + L-lysine. The catalysed reaction is [amino-group carrier protein]-C-terminal-gamma-(L-ornithyl)-L-glutamate + H2O = [amino-group carrier protein]-C-terminal-L-glutamate + L-ornithine. Its pathway is amino-acid biosynthesis; L-lysine biosynthesis via AAA pathway; L-lysine from L-alpha-aminoadipate (Thermus route): step 5/5. It functions in the pathway amino-acid biosynthesis; L-arginine biosynthesis. In terms of biological role, catalyzes the release of L-lysine from [LysW]-gamma-L-lysine and the release of L-ornithine from [LysW]-L-ornithine. This is Putative [LysW]-lysine/[LysW]-ornithine hydrolase from Pyrobaculum aerophilum (strain ATCC 51768 / DSM 7523 / JCM 9630 / CIP 104966 / NBRC 100827 / IM2).